Consider the following 150-residue polypeptide: MESSQATTKPTRGAGGRKGGDRKKSVSKSVKAGLQFPVGRIARYLKKGRYALRYGSGAPVYLAAVLEYLAAEVLELAGNAARDNKKNRINPRHLCLAIRNDEELGRLLHGVTIASGGVLPNINPVLLPKKSTASSSQAEKASATKSPKKA.

The span at 1–12 shows a compositional bias: low complexity; sequence MESSQATTKPTR. Disordered regions lie at residues 1-28 and 130-150; these read MESS…SVSK and KSTA…PKKA. The segment covering 131–150 has biased composition (polar residues); the sequence is STASSSQAEKASATKSPKKA. S146 carries the phosphoserine modification. The SPKK motif signature appears at 146 to 149; that stretch reads SPKK.

It belongs to the histone H2A family. In terms of assembly, the nucleosome is a histone octamer containing two molecules each of H2A, H2B, H3 and H4 assembled in one H3-H4 heterotetramer and two H2A-H2B heterodimers. The octamer wraps approximately 147 bp of DNA. Not ubiquitinated.

It localises to the nucleus. It is found in the chromosome. Functionally, core component of nucleosome. Nucleosomes wrap and compact DNA into chromatin, limiting DNA accessibility to the cellular machineries which require DNA as a template. Histones thereby play a central role in transcription regulation, DNA repair, DNA replication and chromosomal stability. DNA accessibility is regulated via a complex set of post-translational modifications of histones, also called histone code, and nucleosome remodeling. The chain is Probable histone H2A.5 from Arabidopsis thaliana (Mouse-ear cress).